Here is a 293-residue protein sequence, read N- to C-terminus: ATP synthase gamma chain (293 aa).

It belongs to the ATPase gamma chain family. F-type ATPases have 2 components, CF(1) - the catalytic core - and CF(0) - the membrane proton channel. CF(1) has five subunits: alpha(3), beta(3), gamma(1), delta(1), epsilon(1). CF(0) has three main subunits: a, b and c.

Its subcellular location is the cell membrane. Produces ATP from ADP in the presence of a proton gradient across the membrane. The gamma chain is believed to be important in regulating ATPase activity and the flow of protons through the CF(0) complex. This chain is ATP synthase gamma chain, found in Streptococcus gordonii (strain Challis / ATCC 35105 / BCRC 15272 / CH1 / DL1 / V288).